Consider the following 25-residue polypeptide: Caerin 1.1 (25 aa).

A Leucine amide modification is found at L25.

In terms of tissue distribution, expressed by the skin dorsal glands.

It is found in the secreted. Antibacterial peptide with wide spectrum of activity. Active against the Gram-positive bacteria B.cereus (MIC=50 ug/ml), E.faecalis (MIC=25 ug/ml), L.lactis (MIC=1.5 ug/ml), L.innocua (MIC=25 ug/ml), S.aureus (MIC=3 ug/ml), S.epidermidis (MIC=12 ug/ml) and S.uberis (MIC=12 ug/ml), and against the Gram-negative bacteria E.coli (MIC=100 ug/ml) and P.multocida (MIC=25 ug/ml). The polypeptide is Caerin 1.1 (Litoria peronii (Emerald spotted tree frog)).